Reading from the N-terminus, the 634-residue chain is Heat shock 70-related protein 1, mitochondrial (634 aa).

A mitochondrion-targeting transit peptide spans 1–20; it reads MFARRVCGSAAASAACLARH. The stretch at 538-614 forms a coiled coil; that stretch reads SEQHAEADRV…AAATDKLQKA (77 aa).

The protein belongs to the heat shock protein 70 family.

Its subcellular location is the mitochondrion. The sequence is that of Heat shock 70-related protein 1, mitochondrial (HSP70.1) from Leishmania major.